The primary structure comprises 79 residues: Mycoredoxin 1 (79 aa).

The Glutaredoxin domain occupies 1 to 79 (MSNVTIYATD…EVIAKIEALA (79 aa)).

It belongs to the glutaredoxin family.

It is found in the cytoplasm. It catalyses the reaction [mycoredoxin]-L-cysteine + arseno-mycothiol + H(+) = [mycoredoxin]-S-mycothiol-L-cysteine + arsenite. In terms of biological role, involved in defense against toxic arsenate. Involved in the mycothiol/myoredoxin redox pathway which uses a mycothioltransferase mechanism; functions as a monothiol mixed disulfide reductase and is recycled by a second mycothiol forming mycothione which in turn is reduced in a NADPH-dependent manner. In Corynebacterium glutamicum (strain ATCC 13032 / K051), this protein is Mycoredoxin 1 (mrx1).